Here is a 365-residue protein sequence, read N- to C-terminus: Cobalt-precorrin-5B C(1)-methyltransferase (365 aa).

It belongs to the CbiD family.

The catalysed reaction is Co-precorrin-5B + S-adenosyl-L-methionine = Co-precorrin-6A + S-adenosyl-L-homocysteine. It functions in the pathway cofactor biosynthesis; adenosylcobalamin biosynthesis; cob(II)yrinate a,c-diamide from sirohydrochlorin (anaerobic route): step 6/10. In terms of biological role, catalyzes the methylation of C-1 in cobalt-precorrin-5B to form cobalt-precorrin-6A. The protein is Cobalt-precorrin-5B C(1)-methyltransferase of Methanococcus maripaludis (strain DSM 14266 / JCM 13030 / NBRC 101832 / S2 / LL).